A 309-amino-acid polypeptide reads, in one-letter code: Calcium homeostasis modulator protein 5 (309 aa).

The Cytoplasmic segment spans residues 1 to 15; the sequence is MDAFQGILKFFLNQK. Residues lysine 15, arginine 32, and valine 37 each coordinate a 1,2-diacyl-sn-glycero-3-phosphate. A helical transmembrane segment spans residues 16–37; that stretch reads TVIGYSFMALLTVGSERLFSVV. Over 38 to 45 the chain is Extracellular; the sequence is AFKCPCST. 3 cysteine pairs are disulfide-bonded: cysteine 41/cysteine 127, cysteine 43/cysteine 158, and cysteine 142/cysteine 149. Residues 46–70 form a helical membrane-spanning segment; the sequence is ENMTYGLVFLFAPAWVLLILGFFLN. Topologically, residues 71–99 are cytoplasmic; the sequence is NRSWRLFTGCCVNPRKIFPRGHSCRFFYV. Residues 100–129 traverse the membrane as a helical segment; that stretch reads LGQITLSSLVAPVMWLSVALLNGTFYECAM. Positions 102 and 121 each coordinate a 1,2-diacyl-sn-glycero-3-phosphate. Over 130 to 174 the chain is Extracellular; that stretch reads SGTRSSGLLELICKGKPKECWEELHKVSCGKTSMLPTVNEELKLS. The chain crosses the membrane as a helical span at residues 175-200; the sequence is LQAQSQILGWCLICSASFFSLLTTCY. Topologically, residues 201–309 are cytoplasmic; the sequence is ARCRSKVSYL…MVLVGTAHNM (109 aa). Arginine 202 is an a 1,2-diacyl-sn-glycero-3-phosphate binding site.

It belongs to the CALHM family. Oligomerizes to form undecameric cone-shaped channels.

It is found in the membrane. May assemble to form large pore channels with gating and ion conductance likely regulated by membrane lipids. This chain is Calcium homeostasis modulator protein 5, found in Homo sapiens (Human).